Consider the following 47-residue polypeptide: Large ribosomal subunit protein bL36B (47 aa).

It belongs to the bacterial ribosomal protein bL36 family.

This Pectobacterium atrosepticum (strain SCRI 1043 / ATCC BAA-672) (Erwinia carotovora subsp. atroseptica) protein is Large ribosomal subunit protein bL36B.